The primary structure comprises 379 residues: Cobalt-precorrin-5B C(1)-methyltransferase (379 aa).

Belongs to the CbiD family.

It catalyses the reaction Co-precorrin-5B + S-adenosyl-L-methionine = Co-precorrin-6A + S-adenosyl-L-homocysteine. It functions in the pathway cofactor biosynthesis; adenosylcobalamin biosynthesis; cob(II)yrinate a,c-diamide from sirohydrochlorin (anaerobic route): step 6/10. Its function is as follows. Catalyzes the methylation of C-1 in cobalt-precorrin-5B to form cobalt-precorrin-6A. This is Cobalt-precorrin-5B C(1)-methyltransferase from Salmonella schwarzengrund (strain CVM19633).